The sequence spans 616 residues: Chaperone protein HscA (616 aa).

This sequence belongs to the heat shock protein 70 family.

Chaperone involved in the maturation of iron-sulfur cluster-containing proteins. Has a low intrinsic ATPase activity which is markedly stimulated by HscB. Involved in the maturation of IscU. The sequence is that of Chaperone protein HscA from Klebsiella pneumoniae (strain 342).